The chain runs to 225 residues: NAD(P)H-quinone oxidoreductase subunit K, chloroplastic (225 aa).

Residues Cys-43, Cys-44, Cys-108, and Cys-139 each coordinate [4Fe-4S] cluster.

This sequence belongs to the complex I 20 kDa subunit family. NDH is composed of at least 16 different subunits, 5 of which are encoded in the nucleus. [4Fe-4S] cluster is required as a cofactor.

Its subcellular location is the plastid. It localises to the chloroplast thylakoid membrane. The catalysed reaction is a plastoquinone + NADH + (n+1) H(+)(in) = a plastoquinol + NAD(+) + n H(+)(out). It catalyses the reaction a plastoquinone + NADPH + (n+1) H(+)(in) = a plastoquinol + NADP(+) + n H(+)(out). Its function is as follows. NDH shuttles electrons from NAD(P)H:plastoquinone, via FMN and iron-sulfur (Fe-S) centers, to quinones in the photosynthetic chain and possibly in a chloroplast respiratory chain. The immediate electron acceptor for the enzyme in this species is believed to be plastoquinone. Couples the redox reaction to proton translocation, and thus conserves the redox energy in a proton gradient. This chain is NAD(P)H-quinone oxidoreductase subunit K, chloroplastic, found in Nasturtium officinale (Watercress).